Here is a 123-residue protein sequence, read N- to C-terminus: Small ribosomal subunit protein uS12 (123 aa).

The disordered stretch occupies residues 11 to 32 (PRQEKTYREKARHLGASPQKRG). D89 carries the post-translational modification 3-methylthioaspartic acid.

The protein belongs to the universal ribosomal protein uS12 family. As to quaternary structure, part of the 30S ribosomal subunit. Contacts proteins S8 and S17. May interact with IF1 in the 30S initiation complex.

In terms of biological role, with S4 and S5 plays an important role in translational accuracy. Its function is as follows. Interacts with and stabilizes bases of the 16S rRNA that are involved in tRNA selection in the A site and with the mRNA backbone. Located at the interface of the 30S and 50S subunits, it traverses the body of the 30S subunit contacting proteins on the other side and probably holding the rRNA structure together. The combined cluster of proteins S8, S12 and S17 appears to hold together the shoulder and platform of the 30S subunit. The protein is Small ribosomal subunit protein uS12 of Methylocella silvestris (strain DSM 15510 / CIP 108128 / LMG 27833 / NCIMB 13906 / BL2).